A 382-amino-acid polypeptide reads, in one-letter code: Ustilagic acid biosynthesis cluster protein orf2 (382 aa).

Residues 1-20 show a composition bias toward polar residues; it reads MLQEAKVSTHTSNPLSQSVP. The segment at 1 to 22 is disordered; sequence MLQEAKVSTHTSNPLSQSVPQY.

The protein operates within secondary metabolite biosynthesis. Part of the gene cluster that mediates the biosynthesis of the glycolipid biosurfactant ustilagic acid (UA). UA is a secreted cellobiose glycolipid that is toxic for many microorganisms and confers biocontrol activity to U.maydis. UA consists of 15,16-dihydroxypalmitic or 2,15,16-trihydroxypalmitic acid, which is O-glycosidically linked to cellobiose at its terminal hydroxyl group. In addition, the cellobiose moiety is acetylated and acylated with a short-chain hydroxy fatty acid. UA biosynthesis starts with omega-hydroxylation of palmitic acid catalyzed by the cytochrome P450 monooxygenase cyp1. Terminal hydroxylation of palmitic acid precedes subterminal hydroxylation catalyzed by the cytochrome P450 monooxygenase cyp2. Sequential glucosylation of the hydroxy fatty acid is probably catalyzed by the glycosyltransferase ugt1. The cellobiose lipid is further decorated by acetylation of the proximal glucose residue and by acylation with a short-chain beta-hydroxy fatty acid at the distal glucose residue. The acyltransferase uat1 may be a good candidate for catalyzing either acetylation or acylation of the cellobiose lipid. The fatty acid synthase fas2 may be involved in synthesis of the carbon backbone of the short-chain beta-hydroxy fatty acid esterified to the cellobiose disaccharide. The secreted UA consists of a mixture of both alpha-hydroxylated and non-hydroxylated glycolipids; therefore, alpha-hydroxylation of the long-chain fatty, catalyzed by the fatty acid hydroxylase ahd1, occurs late in UA biosynthesis and may be the last step before secretion. The protein is Ustilagic acid biosynthesis cluster protein orf2 of Mycosarcoma maydis (Corn smut fungus).